The following is a 468-amino-acid chain: Tyrosine phenol-lyase (468 aa).

An N6-(pyridoxal phosphate)lysine modification is found at lysine 260.

The protein belongs to the beta-eliminating lyase family. In terms of assembly, homotetramer. Pyridoxal 5'-phosphate is required as a cofactor.

The enzyme catalyses L-tyrosine + H2O = phenol + pyruvate + NH4(+). In Lacrimispora saccharolytica (strain ATCC 35040 / DSM 2544 / NRCC 2533 / WM1) (Clostridium saccharolyticum), this protein is Tyrosine phenol-lyase.